Reading from the N-terminus, the 234-residue chain is MGTAFKKFCIKFCCCCCCEDEDEEEKAPLIGHDTLDYFDREAKKRRDQETNLWSEPGDPSHSERDDDRVLYKLLQCRQQTQPGSRGYRRLSIDIEAMRDVRREVRDKWKMILENLGFMAEAESLLNVSASASYDRMRNAASARSLLQTLHTETSLFNSKEPPPERYLFILDRLIYLDAAEDFVAKARRFYPPKDDDEEEESNPLGINLPLLLSRMNQNISGGEDEDEDESEPDD.

The tract at residues 215-234 is disordered; it reads MNQNISGGEDEDEDESEPDD. Positions 222–234 are enriched in acidic residues; sequence GEDEDEDESEPDD.

The protein belongs to the melanoregulin family.

It localises to the apical cell membrane. It is found in the melanosome membrane. The protein localises to the lysosome membrane. The protein resides in the cytoplasmic vesicle membrane. Its function is as follows. Probably functions as a cargo-recognition protein that couples cytoplasmic vesicles to the transport machinery. Contributes to retrograde melanosome transport from the cell periphery to the center. Overexpression causes accumulation of late endosomes and/or lysosomes at the microtubule organising center (MTOC) at the center of the cell. Probably binds cholesterol and requires the presence of cholesterol in membranes to function in microtubule-mediated retrograde organelle transport. Binds phosphatidylinositol 3-phosphate, phosphatidylinositol 4-phosphate, phosphatidylinositol 5-phosphate and phosphatidylinositol 3,5-bisphosphate. The chain is Melanoregulin (mreg) from Danio rerio (Zebrafish).